Consider the following 338-residue polypeptide: uncharacterized protein (338 aa).

Positions methionine 1 to alanine 29 are cleaved as a signal peptide.

Belongs to the aerolysin family.

This is an uncharacterized protein from Staphylococcus aureus (strain MSSA476).